Here is a 478-residue protein sequence, read N- to C-terminus: Zinc metalloproteinase/disintegrin (478 aa).

A signal peptide spans 1 to 20 (MIQVLLVTICLAVFPYQGSS). Positions 21–194 (KTLKSGNVND…KASQLNLTPE (174 aa)) are excised as a propeptide. A Pyrrolidone carboxylic acid modification is found at glutamine 195. The region spanning 201 to 397 (RYIELVIVAD…RNPQCILNQP (197 aa)) is the Peptidase M12B domain. Residues glutamate 204 and aspartate 288 each coordinate Ca(2+). 3 disulfide bridges follow: cysteine 312-cysteine 392, cysteine 352-cysteine 376, and cysteine 354-cysteine 359. Histidine 337 lines the Zn(2+) pocket. Glutamate 338 is an active-site residue. Positions 341 and 347 each coordinate Zn(2+). Cysteine 392 and asparagine 395 together coordinate Ca(2+). The propeptide occupies 398–413 (LRTDTVSTPVSGNELL). The Disintegrin domain occupies 405–478 (TPVSGNELLQ…SDCPRNPYKD (74 aa)). Intrachain disulfides connect cysteine 420–cysteine 443, cysteine 434–cysteine 440, cysteine 439–cysteine 464, and cysteine 452–cysteine 471. The short motif at 456–458 (VGD) is the Cell attachment site; atypical (VGD) element.

It belongs to the venom metalloproteinase (M12B) family. P-II subfamily. P-IIe sub-subfamily. Monomer (metalloproteinase). Heterodimer; disulfide-linked (disintegrin). Zn(2+) serves as cofactor. Expressed by the venom gland.

It localises to the secreted. Fibrinolytic and caseinolytic activities are inhibited by Cd(2+), Cu(2+) and Co(2+) ions. Not inhibited by Mg(2+), Ca(2+) and Ba(2+). Also inhibited by EDTA, EGTA and 1,10-phenanthroline. Functionally, fibrinolytic and fibrinogenolytic metalloproteinase that hydrolyzes the Aalpha-chain and more slowly the Bbeta-chain of fibrin and fibrinogen. Its fibrinolytic activity is direct, without any plasminogen activation. Also hydrolyzes casein and B-chain of oxidized insulin. Inhibits ADP-induced and collagen-induced platelet aggregation. Shows low hemorrhagic activity. Cleaves the plasma proteinase inhibitors alpha(2)-macroglobulin (A2M) and pregnancy zone protein (PZP), and is inhibited by them. The metalloprotease has no strict P1-P1' specificity requirement. Hydrolysis at sites with a Pro residue at P1 is observed with bradykinin, substance P, PZP and alpha chain fibrinogen (FGA). Poor inhibitor of platelet aggregation. The disintegrin inhibits the adhesion of the alpha-4/beta-1 (ITGA4/ITGB1) integrin to VCAM-1. Inhibition on alpha-2b/beta-3 (ITGA2B/ITGB3) is low. The polypeptide is Zinc metalloproteinase/disintegrin (Macrovipera lebetinus (Levantine viper)).